We begin with the raw amino-acid sequence, 194 residues long: Mitochondrial inner membrane protease ATP23 (194 aa).

The interval 1–20 is disordered; it reads MEDAAAPNSGSEFNPGARRG. H96 serves as a coordination point for Zn(2+). E97 is an active-site residue. H100 contributes to the Zn(2+) binding site.

This sequence belongs to the peptidase M76 family.

It localises to the mitochondrion inner membrane. Functionally, has a dual role in the assembly of mitochondrial ATPase. Acts as a protease that removes the N-terminal 10 residues of mitochondrial ATPase CF(0) subunit 6 (ATP6) at the intermembrane space side. Also involved in the correct assembly of the membrane-embedded ATPase CF(0) particle, probably mediating association of ATP6 with the subunit 9 ring. The protein is Mitochondrial inner membrane protease ATP23 of Arabidopsis thaliana (Mouse-ear cress).